A 101-amino-acid chain; its full sequence is Gamma-secretase subunit PEN-2 (101 aa).

The Cytoplasmic portion of the chain corresponds to 1 to 17 (MNLERVSNEEKLNLCRK). The segment at residues 18 to 36 (YYLGGFAFLPFLWLVNIFW) is an intramembrane region (helical). Over 37 to 57 (FFREAFLVPAYTEQSQIKGYV) the chain is Cytoplasmic. The chain crosses the membrane as a helical span at residues 58–78 (WRSAVGFLFWVIVLTSWITIF). The Lumenal portion of the chain corresponds to 79–101 (QIYRPRWGALGDYLSFTIPLGTP).

This sequence belongs to the PEN-2 family. In terms of assembly, the functional gamma-secretase complex is composed of at least four polypeptides: a presenilin homodimer (PSEN1 or PSEN2), nicastrin (NCSTN), APH1 (APH1A or APH1B) and PSENEN. Widely expressed. Expressed in leukocytes, lung, placenta, small intestine, liver, kidney, spleen thymus, skeletal muscle, heart and brain.

The protein localises to the endoplasmic reticulum membrane. The protein resides in the golgi apparatus. It is found in the golgi stack membrane. Its subcellular location is the cell membrane. It localises to the membrane. Essential subunit of the gamma-secretase complex, an endoprotease complex that catalyzes the intramembrane cleavage of integral membrane proteins such as Notch receptors and APP (amyloid-beta precursor protein). The gamma-secretase complex plays a role in Notch and Wnt signaling cascades and regulation of downstream processes via its role in processing key regulatory proteins, and by regulating cytosolic CTNNB1 levels. PSENEN modulates both endoproteolysis of presenilin and gamma-secretase activity. The polypeptide is Gamma-secretase subunit PEN-2 (PSENEN) (Homo sapiens (Human)).